A 296-amino-acid polypeptide reads, in one-letter code: Nucleotide-binding protein SPCG_1551 (296 aa).

13–20 (GMSGAGKT) contributes to the ATP binding site. 63–66 (DMRS) contacts GTP.

It belongs to the RapZ-like family.

Its function is as follows. Displays ATPase and GTPase activities. The polypeptide is Nucleotide-binding protein SPCG_1551 (Streptococcus pneumoniae (strain CGSP14)).